A 212-amino-acid chain; its full sequence is Urease accessory protein UreG (212 aa).

Gly-11–Thr-18 is a binding site for GTP.

The protein belongs to the SIMIBI class G3E GTPase family. UreG subfamily. Homodimer. UreD, UreF and UreG form a complex that acts as a GTP-hydrolysis-dependent molecular chaperone, activating the urease apoprotein by helping to assemble the nickel containing metallocenter of UreC. The UreE protein probably delivers the nickel.

It localises to the cytoplasm. Facilitates the functional incorporation of the urease nickel metallocenter. This process requires GTP hydrolysis, probably effectuated by UreG. This chain is Urease accessory protein UreG, found in Trichodesmium erythraeum (strain IMS101).